Reading from the N-terminus, the 699-residue chain is Receptor-type tyrosine-protein phosphatase epsilon (699 aa).

The signal sequence occupies residues 1–19 (MEPFCPLLLASFSLSLARA). Residues 20-36 (GQGNDTTPTESNWTSTT) show a composition bias toward low complexity. The interval 20 to 40 (GQGNDTTPTESNWTSTTAGPP) is disordered. Over 20–45 (GQGNDTTPTESNWTSTTAGPPDPGAS) the chain is Extracellular. Residues asparagine 23 and asparagine 31 are each glycosylated (N-linked (GlcNAc...) asparagine). The chain crosses the membrane as a helical span at residues 46–68 (QPLLTWLLLPLLLLLFLLAAYFF). Residues 69 to 699 (RFRKQRKAVV…DIFSDYANFK (631 aa)) are Cytoplasmic-facing. Tyrosine-protein phosphatase domains follow at residues 134-393 (FREE…LLEY) and 425-688 (LEEE…VQDF). Residues aspartate 302, 334-340 (CSAGVGR), and glutamine 378 contribute to the substrate site. Cysteine 334 (phosphocysteine intermediate) is an active-site residue. The active-site Phosphocysteine intermediate is cysteine 629. Tyrosine 695 is subject to Phosphotyrosine.

It belongs to the protein-tyrosine phosphatase family. Receptor class 4 subfamily. Monomer. Isoform 2: Homodimer. Can form oligomers. Dimerization is increased by oxidative stress and decreased by EGFR. Isoform 2 interacts with GRB2. Post-translationally, a catalytically active cytoplasmic form (p65) is produced by proteolytic cleavage of either isoform 1, isoform 2 or isoform 3. Phosphorylated on tyrosine residues by tyrosine kinase Neu. In terms of processing, glycosylated. As to expression, isoform 2 is expressed in the spleen and thymus (at protein level). Detected in fibroblasts, myeloid cells, macrophages, and T-cells but not in B-cell lines. Isoform 1 and isoform 2 are expressed predominantly in the brain, testes, and lungs, with lower levels present in lymph nodes, thymus, spleen, heart and mammary glands. Isoform 1 is expressed in osteoclasts and not in osteoblasts and its expression is related to osteoclast differentiation. It is also expressed in the erythrocytes. Isoform 2 is strongly expressed in skeletal muscle and L6 skeletal muscle cell line.

It is found in the cell membrane. It localises to the cytoplasm. It catalyses the reaction O-phospho-L-tyrosyl-[protein] + H2O = L-tyrosyl-[protein] + phosphate. Inhibited by alendronate (ALN), orthovanadate, and phenylarsine oxide (PAO). Its function is as follows. Acts as a negative regulator of insulin receptor (IR) signaling and is involved in insulin-induced glucose metabolism mainly through direct dephosphorylation and inactivation of IR in hepatocytes and liver. Plays a critical role in signaling transduction pathways and phosphoprotein network topology in red blood cells. May play a role in osteoclast formation and function. Functionally, acts as a negative regulator of insulin receptor (IR) signaling in skeletal muscle. Regulates insulin-induced tyrosine phosphorylation of insulin receptor (IR) and insulin receptor substrate 1 (IRS-1), phosphorylation of protein kinase B and glycogen synthase kinase-3 and insulin induced stimulation of glucose uptake. Isoform 1 and isoform 2 act as a negative regulator of FceRI-mediated signal transduction leading to cytokine production and degranulation, most likely by acting at the level of SYK to affect downstream events such as phosphorylation of SLP76 and LAT and mobilization of Ca(2+). In Mus musculus (Mouse), this protein is Receptor-type tyrosine-protein phosphatase epsilon (Ptpre).